The sequence spans 313 residues: Ubiquinone biosynthesis protein COQ4, mitochondrial (313 aa).

Histidine 197, aspartate 198, histidine 201, and glutamate 213 together coordinate Zn(2+). Residues 290–313 (QPPDLRELRRKQKKLPEPERENAN) form a disordered region. Positions 303–313 (KLPEPERENAN) are enriched in basic and acidic residues.

It belongs to the COQ4 family. Component of a multi-subunit COQ enzyme complex, composed of at least COQ3, COQ4, COQ5, COQ6, COQ7 and COQ9. Zn(2+) serves as cofactor.

Its subcellular location is the mitochondrion inner membrane. It carries out the reaction a 4-hydroxy-3-methoxy-5-(all-trans-polyprenyl)benzoate + H(+) = a 2-methoxy-6-(all-trans-polyprenyl)phenol + CO2. It functions in the pathway cofactor biosynthesis; ubiquinone biosynthesis. Its function is as follows. Lyase that catalyzes the C1-decarboxylation of 4-hydroxy-3-methoxy-5-(all-trans-polyprenyl)benzoic acid into 2-methoxy-6-(all-trans-polyprenyl)phenol during ubiquinone biosynthesis. This Meyerozyma guilliermondii (strain ATCC 6260 / CBS 566 / DSM 6381 / JCM 1539 / NBRC 10279 / NRRL Y-324) (Yeast) protein is Ubiquinone biosynthesis protein COQ4, mitochondrial.